The sequence spans 616 residues: Probable galacturonosyltransferase 4 (616 aa).

Over 1-6 the chain is Cytoplasmic; the sequence is MMVKLR. A helical; Signal-anchor for type II membrane protein membrane pass occupies residues 7-29; it reads NLVLFFMLLTVVAHILLYTDPAA. Over 30–616 the chain is Lumenal; it reads SFKTPFSKRD…VYLRECNINP (587 aa). The segment at 132-152 is disordered; sequence QTSEKVDEQPEPNAFGAKKDT. N-linked (GlcNAc...) asparagine glycosylation is found at N291, N326, N378, N481, and N514.

The protein belongs to the glycosyltransferase 8 family. As to expression, expressed in roots, inflorescences, siliques, leaves and stems.

The protein resides in the golgi apparatus membrane. It participates in glycan metabolism; pectin biosynthesis. In terms of biological role, may be involved in pectin and/or xylans biosynthesis in cell walls. The protein is Probable galacturonosyltransferase 4 (GAUT4) of Arabidopsis thaliana (Mouse-ear cress).